The sequence spans 153 residues: Histone H2A (153 aa).

2 disordered regions span residues 1 to 27 and 131 to 153; these read MDTG…VSRS and KAAA…PKKA. Residues 132-147 show a composition bias toward low complexity; it reads AAAAATKEPKSPAKAT. An SPKK motif motif is present at residues 149-152; the sequence is SPKK.

The protein belongs to the histone H2A family. As to quaternary structure, the nucleosome is a histone octamer containing two molecules each of H2A, H2B, H3 and H4 assembled in one H3-H4 heterotetramer and two H2A-H2B heterodimers. The octamer wraps approximately 147 bp of DNA.

Its subcellular location is the nucleus. It localises to the chromosome. Functionally, core component of nucleosome. Nucleosomes wrap and compact DNA into chromatin, limiting DNA accessibility to the cellular machineries which require DNA as a template. Histones thereby play a central role in transcription regulation, DNA repair, DNA replication and chromosomal stability. DNA accessibility is regulated via a complex set of post-translational modifications of histones, also called histone code, and nucleosome remodeling. In Euphorbia esula (Leafy spurge), this protein is Histone H2A.